We begin with the raw amino-acid sequence, 78 residues long: Omega-conotoxin-like SO-4 (78 aa).

A signal peptide spans 1–22; sequence MKLTCMVIVAVLLLTACQLITA. Positions 23–42 are excised as a propeptide; that stretch reads DDSRGTQKHRSLRSTTKVSK. Cystine bridges form between Cys-46–Cys-62, Cys-53–Cys-65, and Cys-61–Cys-72.

This sequence belongs to the conotoxin O1 superfamily. In terms of tissue distribution, expressed by the venom duct.

It localises to the secreted. Omega-conotoxins act at presynaptic membranes, they bind and block voltage-gated calcium channels (Cav). The polypeptide is Omega-conotoxin-like SO-4 (SO4) (Conus striatus (Striated cone)).